Consider the following 183-residue polypeptide: Dual-action ribosomal maturation protein DarP (183 aa).

Residues 1–20 form a disordered region; sequence MKQKYEDWLNDVPDNQEDDE.

It belongs to the DarP family.

It localises to the cytoplasm. Functionally, member of a network of 50S ribosomal subunit biogenesis factors which assembles along the 30S-50S interface, preventing incorrect 23S rRNA structures from forming. Promotes peptidyl transferase center (PTC) maturation. The polypeptide is Dual-action ribosomal maturation protein DarP (Pectobacterium carotovorum subsp. carotovorum (strain PC1)).